Consider the following 494-residue polypeptide: Nuclear distribution protein PAC1 (494 aa).

The LisH domain occupies 14–46 (QKNELDKSVLRYLNWNYKQTVRHEHAQDYESVR). Positions 90-123 (NSIVRLQKKIIELEQNTETLVSQIKDLNTQVSEL) form a coiled coil. WD repeat units follow at residues 153 to 192 (NVES…IPLA), 196 to 244 (SHTK…CKFQ), 251 to 292 (GHEH…SLKT), 295 to 334 (PHSQ…SVGT), 347 to 395 (HFIE…LMAH), 415 to 454 (GHLS…HVWE), and 457 to 492 (HTGF…SNVF).

The protein belongs to the WD repeat LIS1/nudF family. In terms of assembly, self-associates. Interacts with NDL1 and dynein.

It localises to the cytoplasm. It is found in the cytoskeleton. The protein resides in the spindle pole. Its function is as follows. Positively regulates the activity of the minus-end directed microtubule motor protein dynein. Plays a central role in positioning the mitotic spindle at the bud neck during cell division. Targets cytoplasmic dynein to microtubule plus ends, thereby promoting dynein-mediated microtubule sliding along the bud cortex and consequently the movement of the mitotic spindle to the bud neck. In Saccharomyces cerevisiae (strain YJM789) (Baker's yeast), this protein is Nuclear distribution protein PAC1.